A 183-amino-acid chain; its full sequence is dCTP deaminase (183 aa).

DCTP contacts are provided by residues 97 to 102 and D113; that span reads RSSFAR. E123 acts as the Proton donor/acceptor in catalysis. Residues Y155 and Q162 each coordinate dCTP.

Belongs to the dCTP deaminase family. As to quaternary structure, homotrimer.

It catalyses the reaction dCTP + H2O + H(+) = dUTP + NH4(+). It functions in the pathway pyrimidine metabolism; dUMP biosynthesis; dUMP from dCTP (dUTP route): step 1/2. Catalyzes the deamination of dCTP to dUTP. This chain is dCTP deaminase, found in Sulfurisphaera tokodaii (strain DSM 16993 / JCM 10545 / NBRC 100140 / 7) (Sulfolobus tokodaii).